A 141-amino-acid chain; its full sequence is Nucleoside diphosphate kinase (141 aa).

6 residues coordinate ATP: Lys-11, Phe-59, Arg-87, Thr-93, Arg-104, and Asn-114. His-117 acts as the Pros-phosphohistidine intermediate in catalysis.

The protein belongs to the NDK family. Homotetramer. The cofactor is Mg(2+).

The protein resides in the cytoplasm. The enzyme catalyses a 2'-deoxyribonucleoside 5'-diphosphate + ATP = a 2'-deoxyribonucleoside 5'-triphosphate + ADP. It catalyses the reaction a ribonucleoside 5'-diphosphate + ATP = a ribonucleoside 5'-triphosphate + ADP. Major role in the synthesis of nucleoside triphosphates other than ATP. The ATP gamma phosphate is transferred to the NDP beta phosphate via a ping-pong mechanism, using a phosphorylated active-site intermediate. This Yersinia enterocolitica serotype O:8 / biotype 1B (strain NCTC 13174 / 8081) protein is Nucleoside diphosphate kinase.